Here is a 97-residue protein sequence, read N- to C-terminus: Large ribosomal subunit protein uL23 (97 aa).

It belongs to the universal ribosomal protein uL23 family. As to quaternary structure, part of the 50S ribosomal subunit. Contacts protein L29, and trigger factor when it is bound to the ribosome.

Its function is as follows. One of the early assembly proteins it binds 23S rRNA. One of the proteins that surrounds the polypeptide exit tunnel on the outside of the ribosome. Forms the main docking site for trigger factor binding to the ribosome. This is Large ribosomal subunit protein uL23 from Clostridium perfringens (strain SM101 / Type A).